The sequence spans 517 residues: Synaptic vesicular amine transporter (517 aa).

Residues 1–20 (MALSELALLRRLQESRHSRK) are Cytoplasmic-facing. Residues 21–41 (LILFIVFLALLLDNMLLTVVV) form a helical membrane-spanning segment. Topologically, residues 42-132 (PIIPSYLYSI…EDKDLLNENV (91 aa)) are extracellular. 3 N-linked (GlcNAc...) asparagine glycosylation sites follow: Asn-84, Asn-91, and Asn-112. Cys-120 and Cys-327 are joined by a disulfide. The helical transmembrane segment at 133–153 (QVGLLFASKATVQLLTNPFIG) threads the bilayer. Residues 154 to 162 (LLTNRIGYP) lie on the Cytoplasmic side of the membrane. Residues 163–183 (IPMFTGFCIMFISTVMFAFSR) form a helical membrane-spanning segment. At 184 to 192 (TYAFLLIAR) the chain is on the extracellular side. A helical membrane pass occupies residues 193-213 (SLQGIGSSCSSVAGMGMLASV). Residues 214-222 (YTDDEERGN) are Cytoplasmic-facing. The chain crosses the membrane as a helical span at residues 223-245 (AMGIALGGLAMGVLVGPPFGSVL). Serotonin contacts are provided by Leu-231 and Val-235. Topologically, residues 246–251 (YEFVGK) are extracellular. Residues 252 to 274 (TAPFLVLAALVLLDGAIQLFVLQ) traverse the membrane as a helical segment. Topologically, residues 275–294 (PSRVQPESQKGTPLTTLLRD) are cytoplasmic. A helical membrane pass occupies residues 295 to 314 (PYILIAAGSICFANMGIAML). Residues Asn-308, Ile-311, Glu-315, Phe-337, and Tyr-344 each contribute to the serotonin site. Residues 315–331 (EPALPIWMMETMCSHKW) are Extracellular-facing. The chain crosses the membrane as a helical span at residues 332-355 (QLGVAFLPASVSYLIGTNVFGILA). Residues 356–360 (HKMGR) lie on the Cytoplasmic side of the membrane. Residues 361–381 (WLCALLGMIIVGMSILCIPLA) form a helical membrane-spanning segment. Over 382–392 (KNIYGLIAPNF) the chain is Extracellular. Residues 393-413 (GVGFAIGMVDSSMMPIMGYLV) traverse the membrane as a helical segment. Asp-402 lines the serotonin pocket. Residues 414–417 (DLRH) lie on the Cytoplasmic side of the membrane. The chain crosses the membrane as a helical span at residues 418–438 (VSVYGSVYAIADVAFCMGYAI). Tyr-436 is a serotonin binding site. Residues 439 to 443 (GPSAG) are Extracellular-facing. Residues 444-465 (GAIAKAIGFPWLMTIIGIIDIL) traverse the membrane as a helical segment. Over 466–517 (FAPLCFFLRSPPAKEEKMAILMDHNCPIKTKMYTQNSSQSHPIGEDEESESD) the chain is Cytoplasmic. Residues Ser-514 and Ser-516 each carry the phosphoserine; by CK2 modification.

The protein belongs to the major facilitator superfamily. Vesicular transporter family. Interacts with SLC6A3.

Its subcellular location is the cytoplasmic vesicle. The protein localises to the secretory vesicle. It localises to the synaptic vesicle membrane. The protein resides in the secretory vesicle membrane. It is found in the cell projection. Its subcellular location is the axon. The protein localises to the dendrite. The catalysed reaction is serotonin(in) + 2 H(+)(out) = serotonin(out) + 2 H(+)(in). The enzyme catalyses dopamine(in) + 2 H(+)(out) = dopamine(out) + 2 H(+)(in). It catalyses the reaction histamine(in) + 2 H(+)(out) = histamine(out) + 2 H(+)(in). Its activity is regulated as follows. Strongly inhibited by reserpine and tetrabenazine. Also inhibited to a lesser extent by ketanserin and fenfluramine. Reserpine and ketanserin inhibit by blocking the substrate-binding pocket. Tetrabenazine traps SLC18A2/VMAT2 in an occluded conformation and its inhibition is specific to SLC18A2/VMAT2 but not SLC18A1/VMAT1. Electrogenic antiporter that exchanges one cationic monoamine with two intravesicular protons across the membrane of secretory and synaptic vesicles. Uses the electrochemical proton gradient established by the V-type proton-pump ATPase to accumulate high concentrations of monoamines inside the vesicles prior to their release via exocytosis. Transports a variety of catecholamines such as dopamine, adrenaline and noradrenaline, histamine, and indolamines such as serotonin. Regulates the transvesicular monoaminergic gradient that determines the quantal size. Mediates somatodendritic dopamine release in hippocampal neurons, likely as part of a regulated secretory pathway that integrates retrograde synaptic signals. Acts as a primary transporter for striatal dopamine loading ensuring impulse-dependent release of dopamine at the synaptic cleft. Responsible for histamine and serotonin storage and subsequent corelease from mast cell granules. This is Synaptic vesicular amine transporter (SLC18A2) from Bos taurus (Bovine).